An 86-amino-acid polypeptide reads, in one-letter code: YcgL domain-containing protein XCV4171 (86 aa).

In terms of domain architecture, YcgL spans 1-83; that stretch reads MHAYVYKSQR…PKTIVLAGEC (83 aa).

The sequence is that of YcgL domain-containing protein XCV4171 from Xanthomonas euvesicatoria pv. vesicatoria (strain 85-10) (Xanthomonas campestris pv. vesicatoria).